Reading from the N-terminus, the 53-residue chain is UPF0391 membrane protein YPDSF_3201 (53 aa).

Transmembrane regions (helical) follow at residues 4-24 (WGII…GGLA) and 27-47 (AAWA…ISLF).

This sequence belongs to the UPF0391 family.

It localises to the cell membrane. The protein is UPF0391 membrane protein YPDSF_3201 of Yersinia pestis (strain Pestoides F).